Consider the following 468-residue polypeptide: Protein maelstrom 2 (468 aa).

Positions 2–69 (PPKKHSGFMM…LTRVKKERLN (68 aa)) form a DNA-binding region, HMG box. Residues 374–393 (KEDSPTVLSPASSRRSLASS) are disordered. A compositionally biased stretch (low complexity) spans 381–393 (LSPASSRRSLASS).

It belongs to the maelstrom family.

The protein resides in the cytoplasm. It localises to the nucleus. Its function is as follows. Involved both in the piRNA and miRNA metabolic processes. As a component of the meiotic nuage, plays a central role during oogenesis by repressing transposable elements and preventing their mobilization, which is essential for the germline integrity. Repression of transposable elements is mediated via the piRNA metabolic process, which mediates the repression of transposable elements during meiosis by forming complexes composed of piRNAs and Piwi proteins and governs the repression of transposons. As a nuclear component, it is required for proper differentiation in the germline stem cell (GSC) lineage by repressing microRNA-7 (miR-7), thereby acting as an indirect regulator of bag-of-marbles (Bam). Acts by binding to the promoter of miR-7 gene and repressing its expression; miR-7 repression alleviates the Bam repression by miR-7, thereby allowing differentiation in the germline stem cell (GSC) lineage. The polypeptide is Protein maelstrom 2 (mael2) (Drosophila ananassae (Fruit fly)).